Reading from the N-terminus, the 143-residue chain is Large ribosomal subunit protein uL15 (143 aa).

2 stretches are compositionally biased toward basic residues: residues 1–13 and 23–38; these read MIRK…KMRG and KKHR…GNAG. Positions 1 to 38 are disordered; it reads MIRKSKKITKMRGSRTCGYGEAKKHRGAGHRGGRGNAG.

This sequence belongs to the universal ribosomal protein uL15 family. As to quaternary structure, part of the 50S ribosomal subunit.

Functionally, binds to the 23S rRNA. This Methanococcus maripaludis (strain C6 / ATCC BAA-1332) protein is Large ribosomal subunit protein uL15.